A 406-amino-acid polypeptide reads, in one-letter code: Probable tRNA sulfurtransferase (406 aa).

Residues Asp60–Thr166 form the THUMP domain. ATP-binding positions include Met184 to Met185, His209 to Phe210, Arg266, Gly288, and Gln297.

It belongs to the ThiI family.

The protein localises to the cytoplasm. It carries out the reaction [ThiI sulfur-carrier protein]-S-sulfanyl-L-cysteine + a uridine in tRNA + 2 reduced [2Fe-2S]-[ferredoxin] + ATP + H(+) = [ThiI sulfur-carrier protein]-L-cysteine + a 4-thiouridine in tRNA + 2 oxidized [2Fe-2S]-[ferredoxin] + AMP + diphosphate. The catalysed reaction is [ThiS sulfur-carrier protein]-C-terminal Gly-Gly-AMP + S-sulfanyl-L-cysteinyl-[cysteine desulfurase] + AH2 = [ThiS sulfur-carrier protein]-C-terminal-Gly-aminoethanethioate + L-cysteinyl-[cysteine desulfurase] + A + AMP + 2 H(+). The protein operates within cofactor biosynthesis; thiamine diphosphate biosynthesis. Catalyzes the ATP-dependent transfer of a sulfur to tRNA to produce 4-thiouridine in position 8 of tRNAs, which functions as a near-UV photosensor. Also catalyzes the transfer of sulfur to the sulfur carrier protein ThiS, forming ThiS-thiocarboxylate. This is a step in the synthesis of thiazole, in the thiamine biosynthesis pathway. The sulfur is donated as persulfide by IscS. This chain is Probable tRNA sulfurtransferase, found in Limosilactobacillus reuteri subsp. reuteri (strain JCM 1112) (Lactobacillus reuteri).